The primary structure comprises 189 residues: Elongation factor P (189 aa).

Lysine 34 carries the post-translational modification N6-(3,6-diaminohexanoyl)-5-hydroxylysine.

The protein belongs to the elongation factor P family. May be beta-lysylated on the epsilon-amino group of Lys-34 by the combined action of EpmA and EpmB, and then hydroxylated on the C5 position of the same residue by EpmC (if this protein is present). Lysylation is critical for the stimulatory effect of EF-P on peptide-bond formation. The lysylation moiety may extend toward the peptidyltransferase center and stabilize the terminal 3-CCA end of the tRNA. Hydroxylation of the C5 position on Lys-34 may allow additional potential stabilizing hydrogen-bond interactions with the P-tRNA.

It is found in the cytoplasm. Its pathway is protein biosynthesis; polypeptide chain elongation. Involved in peptide bond synthesis. Alleviates ribosome stalling that occurs when 3 or more consecutive Pro residues or the sequence PPG is present in a protein, possibly by augmenting the peptidyl transferase activity of the ribosome. Modification of Lys-34 is required for alleviation. The protein is Elongation factor P of Dichelobacter nodosus (strain VCS1703A).